The following is a 254-amino-acid chain: 4-hydroxy-tetrahydrodipicolinate reductase (254 aa).

7–12 (GASGRI) contributes to the NAD(+) binding site. Arginine 35 contributes to the NADP(+) binding site. Residues 91–93 (GTT) and 115–118 (AHNM) contribute to the NAD(+) site. The Proton donor/acceptor role is filled by histidine 147. Histidine 148 serves as a coordination point for (S)-2,3,4,5-tetrahydrodipicolinate. Lysine 151 serves as the catalytic Proton donor. Residue 157–158 (GT) participates in (S)-2,3,4,5-tetrahydrodipicolinate binding.

It belongs to the DapB family.

Its subcellular location is the cytoplasm. The enzyme catalyses (S)-2,3,4,5-tetrahydrodipicolinate + NAD(+) + H2O = (2S,4S)-4-hydroxy-2,3,4,5-tetrahydrodipicolinate + NADH + H(+). It catalyses the reaction (S)-2,3,4,5-tetrahydrodipicolinate + NADP(+) + H2O = (2S,4S)-4-hydroxy-2,3,4,5-tetrahydrodipicolinate + NADPH + H(+). Its pathway is amino-acid biosynthesis; L-lysine biosynthesis via DAP pathway; (S)-tetrahydrodipicolinate from L-aspartate: step 4/4. Functionally, catalyzes the conversion of 4-hydroxy-tetrahydrodipicolinate (HTPA) to tetrahydrodipicolinate. This Helicobacter pylori (strain Shi470) protein is 4-hydroxy-tetrahydrodipicolinate reductase.